Reading from the N-terminus, the 263-residue chain is Chymotrypsinogen B (263 aa).

The signal sequence occupies residues 1–18 (MASLWLLSCFSLVGAAFG). 5 disulfides stabilise this stretch: cysteine 19–cysteine 140, cysteine 60–cysteine 76, cysteine 154–cysteine 219, cysteine 186–cysteine 200, and cysteine 209–cysteine 238. In terms of domain architecture, Peptidase S1 spans 34–261 (IVNGEDAVPG…LIPWVQKILA (228 aa)). Catalysis depends on histidine 75, which acts as the Charge relay system. Residue serine 93 is modified to Phosphoserine. The active-site Charge relay system is aspartate 120. Serine 213 (charge relay system) is an active-site residue.

It belongs to the peptidase S1 family.

Its subcellular location is the secreted. It localises to the extracellular space. The catalysed reaction is Preferential cleavage: Tyr-|-Xaa, Trp-|-Xaa, Phe-|-Xaa, Leu-|-Xaa.. The polypeptide is Chymotrypsinogen B (Homo sapiens (Human)).